Consider the following 323-residue polypeptide: Large ribosomal subunit protein uL10 (323 aa).

The segment at 298–323 (AAAAPAAAAEPEEEDDDDDFGMGALF) is disordered. Positions 307–317 (EPEEEDDDDDF) are enriched in acidic residues.

It belongs to the universal ribosomal protein uL10 family. P0 forms a pentameric complex by interaction with dimers of P1 and P2. In terms of processing, phosphorylated.

Functionally, ribosomal protein P0 is the functional equivalent of E.coli protein L10. The polypeptide is Large ribosomal subunit protein uL10 (Trypanosoma cruzi).